A 962-amino-acid chain; its full sequence is MYHFVSEQTPELRLSAEALVTSRVTQYLKSFQLDAVRFVYDRLAKREFCILNDESGLGKVATVAALLSALPPAKKTLVVLQNDEQLLTGWRFHLDTLTDLQVYIIQGVHDTTDSPHSVYLAKWSQLRSIGDLSRLKFDYIMVDNRGHSLNNSFCTSMLLKQFEGRVNVLISSVDITSDVKLLYNVLRLGDRLEHQYKSFSRFDRKFHLPDPKEVFSKRIDLEEYYKQRGFLSEYIKDFRLRRFRHQFDKTLPLVAPEQYKHNLNLWLASKNSQSTLSGSEVCSTVASIENNPPQQNETVLVEESDRISEHSVDDVVAMSPLIFESSESDDEPITVDPVANENPVLVVSSDDCEIVTPPNTPPNRTPLVNKSPRTKSKKKCSKKPSPCKEADLTDSEKDDEGLTMPPRKSTRAATVHFTPKTRRLNVRLLRVSLDALSTPTPSGATTAIITPKTEPSARRKNRTKQPMDVGRPATRGMQRLTRSAESKINSKYLKHHVLDDAKRNFPRRIKAEGNQTPKTSKRIVKQESKAKAKPEQKKKIKTVDKPAQETPKRKPGRPRKCKTLTETLGKSKTKPNSKPLPPTPQVLSGSSLSSEYMQCAQRIPDDLDAIESPAFRVPFTPQQTPMLLTLPSTHNLLNDSEVVAIPLFKDQVETVVINSSHDESSPQDPSQSRRTKALKRKRKPDAPVNSSFGGGLGLPQAKRSATNKSPDLFSISSDLSQIPLAQPRPSSPFEGFKIFGSEVKQFQQQHAKVTIPAPKKKRDRSCLDILEQMFEPRLQQSSKTSPKVLPTLPLIQKDDATTTFTQRRGTLLEDDFFEITNNGQFGSRMRLNASGEVSPVQQDQQSVRPTQANKITNYLIGSVITQERTQPSNGNRNSIVASLRKSPKSPKHGARTTQATKLTRWFGSVFGGGASQTSSVESVSAPSTPVNPSTSAAACQTRTARSGGATGPTKRKRLELFK.

Disordered stretches follow at residues 353-413 (EIVT…TRAA), 438-590 (TPTP…LSGS), 658-712 (NSSH…SPDL), 866-900 (QERT…TQAT), and 916-962 (QTSS…ELFK). A compositionally biased stretch (basic residues) spans 372-382 (PRTKSKKKCSK). Residues 386–395 (PCKEADLTDS) show a composition bias toward basic and acidic residues. 2 stretches are compositionally biased toward polar residues: residues 438–448 (TPTPSGATTAI) and 480–489 (LTRSAESKIN). A compositionally biased stretch (basic and acidic residues) spans 524–552 (VKQESKAKAKPEQKKKIKTVDKPAQETPK). The span at 553 to 562 (RKPGRPRKCK) shows a compositional bias: basic residues. The span at 564–576 (LTETLGKSKTKPN) shows a compositional bias: polar residues. Over residues 673–683 (RRTKALKRKRK) the composition is skewed to basic residues. 2 stretches are compositionally biased toward polar residues: residues 703–712 (RSATNKSPDL) and 866–880 (QERT…NSIV). A compositionally biased stretch (basic residues) spans 885–894 (KSPKSPKHGA). Residues 916-944 (QTSSVESVSAPSTPVNPSTSAAACQTRTA) are compositionally biased toward polar residues. A compositionally biased stretch (basic residues) spans 953-962 (TKRKRLELFK).

It is found in the nucleus. The protein localises to the chromosome. In terms of biological role, required for underreplication of DNA, which is found in many late replicating euchromatic regions of salivary gland polytene chromosomes. Controls chromatin organization in polytene chromosomes. This is Protein suppressor of underreplication (SuUR) from Drosophila erecta (Fruit fly).